A 331-amino-acid chain; its full sequence is MSIATEIIGVPETLDHFQSDSYSPYHFFSSEQWAKFRADTPLTLTSDEVKRLRSMGDPIDLDEVRRIYLSLSRLLSAHVESSQMLFEQRNRFLSLSDVTKTPFVIGIAGSVAVGKSTTARVLKELLGRWPSSPKVDLVTTDGFLHPNAVLQREKLMQRKGFPESYDTAAILRFLSAIKAGQPDVKAPSYSHLVYDVLPDEYKIVDRPDILIFEGINVLQSRDLPAGGKIVPMVSDFFDFSIYIDAAEDLIHNWYVARFMRLRETAFRDPNSYFHRYASISDAEALEIAGDLWANINLKNLRQNILPTRPRADLILKKGKDHLIEQVALRKL.

Glycine 109 to serine 116 lines the ATP pocket.

It belongs to the prokaryotic pantothenate kinase family.

It localises to the cytoplasm. It catalyses the reaction (R)-pantothenate + ATP = (R)-4'-phosphopantothenate + ADP + H(+). Its pathway is cofactor biosynthesis; coenzyme A biosynthesis; CoA from (R)-pantothenate: step 1/5. The chain is Pantothenate kinase from Rhizobium leguminosarum bv. trifolii (strain WSM2304).